The chain runs to 72 residues: Alpha-elapitoxin-Ast2b (72 aa).

Intrachain disulfides connect cysteine 3–cysteine 20, cysteine 13–cysteine 41, cysteine 26–cysteine 30, cysteine 45–cysteine 56, and cysteine 57–cysteine 62. Arginine amide is present on arginine 72.

Belongs to the three-finger toxin family. Long-chain subfamily. Type II alpha-neurotoxin sub-subfamily. In terms of tissue distribution, expressed by the venom gland.

It is found in the secreted. In terms of biological role, binds with high affinity to muscular (alpha-1/CHRNA1) and neuronal (alpha-7/CHRNA7) nicotinic acetylcholine receptor (nAChR) and inhibits acetylcholine from binding to the receptor, thereby impairing neuromuscular and neuronal transmission. In Hydrophis stokesii (Stokes's sea snake), this protein is Alpha-elapitoxin-Ast2b.